The primary structure comprises 667 residues: Transketolase (667 aa).

Histidine 27 is a substrate binding site. Thiamine diphosphate-binding positions include histidine 67 and 115–117; that span reads GPL. Aspartate 156 is a Mg(2+) binding site. Residues glycine 157 and asparagine 186 each coordinate thiamine diphosphate. Mg(2+) contacts are provided by asparagine 186 and isoleucine 188. 3 residues coordinate substrate: histidine 262, arginine 357, and serine 384. Position 262 (histidine 262) interacts with thiamine diphosphate. Glutamate 411 (proton donor) is an active-site residue. Thiamine diphosphate is bound at residue phenylalanine 437. Residues histidine 461, aspartate 469, and arginine 520 each contribute to the substrate site.

This sequence belongs to the transketolase family. In terms of assembly, homodimer. The cofactor is Mg(2+). Ca(2+) serves as cofactor. Mn(2+) is required as a cofactor. It depends on Co(2+) as a cofactor. Requires thiamine diphosphate as cofactor.

The enzyme catalyses D-sedoheptulose 7-phosphate + D-glyceraldehyde 3-phosphate = aldehydo-D-ribose 5-phosphate + D-xylulose 5-phosphate. In terms of biological role, catalyzes the transfer of a two-carbon ketol group from a ketose donor to an aldose acceptor, via a covalent intermediate with the cofactor thiamine pyrophosphate. In Bacillus subtilis (strain 168), this protein is Transketolase (tkt).